We begin with the raw amino-acid sequence, 401 residues long: Secreted LysM effector Blys8 (401 aa).

An N-terminal signal peptide occupies residues 1-19; the sequence is MRTLAIFFIGAAVAAHVSP. Positions 42–89 constitute a LysM 1 domain; the sequence is TYYDEAYDKSYTCDDLLSAWVISKQDFESWNPAVGSDCKLVLGHSYCV. Positions 98 to 136 are enriched in low complexity; the sequence is STTTTTTTSTTTKTTTKTTTTTTAAPKPTSSAPSGPSPT. The interval 98–137 is disordered; the sequence is STTTTTTTSTTTKTTTKTTTTTTAAPKPTSSAPSGPSPTQ. Positions 146-193 constitute a LysM 2 domain; it reads AYYFVKAGDTCDKISQMYGTFSTAQFIEWNPAVGSSCTGLWAGYYYCV. The segment at 201–223 is disordered; that stretch reads SRTSTAGPTSTKPANGVTTPQPT. The region spanning 233-279 is the LysM 3 domain; that stretch reads QFVYVQPGDQCGTVASRAGVSLSDFLQWNPSTGKDCSGLWANAYACV.

Belongs to the secreted LysM effector family.

Might have a role in sequestration of chitin oligosaccharides (breakdown products of fungal cell walls that are released during invasion and act as triggers of host immunity) to dampen host defense. The chain is Secreted LysM effector Blys8 from Beauveria bassiana (strain ARSEF 2860) (White muscardine disease fungus).